The sequence spans 637 residues: Extracellular metalloproteinase 10 (637 aa).

A signal peptide spans 1 to 19 (MHGLLLAATLLSLPFNAVA). Positions 20 to 245 (HVPPTTGLVR…VHNVVDYVAH (226 aa)) are excised as a propeptide. Residue N282 is glycosylated (N-linked (GlcNAc...) asparagine). Position 429 (H429) interacts with Zn(2+). E430 is a catalytic residue. A Zn(2+)-binding site is contributed by H433. N-linked (GlcNAc...) asparagine glycosylation occurs at N502.

Belongs to the peptidase M36 family. The cofactor is Zn(2+).

The protein resides in the secreted. Functionally, secreted metalloproteinase that allows assimilation of proteinaceous substrates. The sequence is that of Extracellular metalloproteinase 10 (MEP10) from Uncinocarpus reesii (strain UAMH 1704).